The following is a 438-amino-acid chain: Flotillin-2 (438 aa).

The protein belongs to the band 7/mec-2 family. Flotillin subfamily. Heterooligomeric complex of flotillins 1 and 2.

Its subcellular location is the membrane. Functionally, may play a role in axon growth and regeneration. May be involved in epidermal cell adhesion and epidermal structure and function. This chain is Flotillin-2, found in Drosophila melanogaster (Fruit fly).